Here is a 304-residue protein sequence, read N- to C-terminus: Ornithine carbamoyltransferase (304 aa).

Residues 47–50 (STRT), Arg-98, and 125–128 (HPCQ) contribute to the carbamoyl phosphate site. Residues Asn-156, Asp-221, and 225–226 (SM) contribute to the L-ornithine site. Carbamoyl phosphate contacts are provided by residues 262–263 (CL) and Arg-290.

The protein belongs to the aspartate/ornithine carbamoyltransferase superfamily. OTCase family.

The protein localises to the cytoplasm. The catalysed reaction is carbamoyl phosphate + L-ornithine = L-citrulline + phosphate + H(+). It participates in amino-acid biosynthesis; L-arginine biosynthesis; L-arginine from L-ornithine and carbamoyl phosphate: step 1/3. In terms of biological role, reversibly catalyzes the transfer of the carbamoyl group from carbamoyl phosphate (CP) to the N(epsilon) atom of ornithine (ORN) to produce L-citrulline. This is Ornithine carbamoyltransferase from Methanococcus maripaludis (strain C5 / ATCC BAA-1333).